The chain runs to 288 residues: ATP synthase gamma chain (288 aa).

Belongs to the ATPase gamma chain family. As to quaternary structure, F-type ATPases have 2 components, CF(1) - the catalytic core - and CF(0) - the membrane proton channel. CF(1) has five subunits: alpha(3), beta(3), gamma(1), delta(1), epsilon(1). CF(0) has three main subunits: a, b and c.

The protein localises to the cell inner membrane. Its function is as follows. Produces ATP from ADP in the presence of a proton gradient across the membrane. The gamma chain is believed to be important in regulating ATPase activity and the flow of protons through the CF(0) complex. The chain is ATP synthase gamma chain from Vibrio vulnificus (strain CMCP6).